The chain runs to 513 residues: Carotenoid isomerooxygenase (513 aa).

4 residues coordinate Fe cation: His-184, His-242, His-312, and His-503.

This sequence belongs to the carotenoid oxygenase family. Fe(2+) serves as cofactor.

The catalysed reaction is all-trans-zeaxanthin + O2 = (3R)-11-cis-3-hydroxyretinal + (3R)-all-trans-3-hydroxyretinal. Its pathway is cofactor metabolism; retinol metabolism. Functionally, catalyzes the oxidative cleavage at the 15,15'-double bond of carotenoids and the simultaneous all-trans to 11-cis isomerization of one cleavage product. Carotenoids like 11-cis retinal can promote visual pigment biogenesis in the dark. Essential for the biosynthesis of the 3-hydroxyretinal chromophore of rhodopsin from zeaxanthin and for proper photoreceptor development. The protein is Carotenoid isomerooxygenase (ninaB) of Galleria mellonella (Greater wax moth).